Here is a 156-residue protein sequence, read N- to C-terminus: 6,7-dimethyl-8-ribityllumazine synthase (156 aa).

5-amino-6-(D-ribitylamino)uracil contacts are provided by residues Phe-23, 57–59 (AFE), and 81–83 (AVI). 86 to 87 (AT) is a (2S)-2-hydroxy-3-oxobutyl phosphate binding site. His-89 acts as the Proton donor in catalysis. Phe-114 is a 5-amino-6-(D-ribitylamino)uracil binding site. Arg-128 is a binding site for (2S)-2-hydroxy-3-oxobutyl phosphate.

The protein belongs to the DMRL synthase family.

It carries out the reaction (2S)-2-hydroxy-3-oxobutyl phosphate + 5-amino-6-(D-ribitylamino)uracil = 6,7-dimethyl-8-(1-D-ribityl)lumazine + phosphate + 2 H2O + H(+). It functions in the pathway cofactor biosynthesis; riboflavin biosynthesis; riboflavin from 2-hydroxy-3-oxobutyl phosphate and 5-amino-6-(D-ribitylamino)uracil: step 1/2. In terms of biological role, catalyzes the formation of 6,7-dimethyl-8-ribityllumazine by condensation of 5-amino-6-(D-ribitylamino)uracil with 3,4-dihydroxy-2-butanone 4-phosphate. This is the penultimate step in the biosynthesis of riboflavin. The protein is 6,7-dimethyl-8-ribityllumazine synthase of Campylobacter concisus (strain 13826).